The primary structure comprises 367 residues: Ferrochelatase (367 aa).

Fe cation-binding residues include His-213 and Glu-294.

The protein belongs to the ferrochelatase family.

The protein localises to the cytoplasm. It catalyses the reaction heme b + 2 H(+) = protoporphyrin IX + Fe(2+). It participates in porphyrin-containing compound metabolism; protoheme biosynthesis; protoheme from protoporphyrin-IX: step 1/1. Functionally, catalyzes the ferrous insertion into protoporphyrin IX. This Dechloromonas aromatica (strain RCB) protein is Ferrochelatase.